A 1051-amino-acid chain; its full sequence is Putative transcription factor SEF1 (1051 aa).

Positions 1-10 are enriched in basic and acidic residues; that stretch reads MSTDVSERGA. Disordered regions lie at residues 1 to 54 and 67 to 90; these read MSTD…SEES and GQAS…RPVT. Over residues 11 to 21 the composition is skewed to low complexity; it reads EAGSSSGLLSS. Positions 92–122 form a DNA-binding region, zn(2)-C6 fungal-type; it reads CTHCRQHKIKCNASENFPSSCSRCERMGLQC. Residues 206–218 show a composition bias toward low complexity; that stretch reads SSVKSSVNTPSGS. Disordered regions lie at residues 206–227, 738–759, and 927–968; these read SSVK…VDVS, EKNR…TEKR, and ASGN…QPAP.

Its subcellular location is the nucleus. In terms of biological role, putative transcription factor. In Eremothecium gossypii (strain ATCC 10895 / CBS 109.51 / FGSC 9923 / NRRL Y-1056) (Yeast), this protein is Putative transcription factor SEF1 (SEF1).